The chain runs to 712 residues: TGF-beta-activated kinase 1 and MAP3K7-binding protein 3 (712 aa).

Position 2 is an N-acetylalanine (A2). In terms of domain architecture, CUE spans 8 to 51; that stretch reads LDIQVLHDLRQRFPEIPEGVVSQCMLQNNNNLEACCRALSQESS. Phosphoserine occurs at positions 60, 101, and 103. 4 disordered regions span residues 141–189, 227–345, 369–447, and 475–509; these read FMNE…HIPR, PGSI…KQGS, TVEP…SPRV, and ERSA…SSGS. The span at 163–173 shows a compositional bias: polar residues; the sequence is MQTGMNPSAMQ. Low complexity-rich tracts occupy residues 233 to 249 and 269 to 290; these read RQTS…QSTP and YPHQ…IPQS. Positions 322–332 are enriched in pro residues; the sequence is PPSPSTTPPHP. 2 stretches are compositionally biased toward polar residues: residues 336 to 345 and 371 to 404; these read GPPSYQKQGS and EPSQ…TATT. S385 carries the post-translational modification Phosphoserine. T404 bears the Phosphothreonine mark. A compositionally biased stretch (low complexity) spans 405–417; it reads PPSSSPSRGISSQ. Residues S409 and S492 each carry the phosphoserine modification. S506 is subject to Phosphoserine; by MAPKAPK2 and MAPKAPK3. Positions 517 to 559 form a coiled coil; sequence ALLLHQRARMERLAKQLKLEKEELERLKSEVNGMEHDLMQRRL. The segment at 609-636 is disordered; the sequence is MNNFYDNIEPGPVVPPKPSKKDSSDPCT. Over residues 627 to 636 the composition is skewed to basic and acidic residues; the sequence is SKKDSSDPCT. K649 participates in a covalent cross-link: Glycyl lysine isopeptide (Lys-Gly) (interchain with G-Cter in ubiquitin). Basic and acidic residues predominate over residues 658-667; that stretch reads QAAAADEHRT. A disordered region spans residues 658 to 682; the sequence is QAAAADEHRTGSTQSPRTQPRDEDY. A RanBP2-type zinc finger spans residues 682–712; sequence YEGAPWNCDSCTFLNHPALNRCEQCEMPRYT. Residue C692 is modified to (Microbial infection) S-methylcysteine.

In terms of assembly, interacts with TAB1, TAB2, MAP3K7, TRAF2 and TRAF6. The minimal TAB3-containing complex (TAB1-MAP3K7-TAB3) appears not to contain TAB2. However, it seems sensible to consider that TAB2 may also join this complex and may act in a cooperative manner with TAB3. Interacts with DYNC2I2 (via the WD domains). Interacts with RBCK1. Binds 'Lys-63'-linked polyubiquitin chains. Interacts with TRIM5. Interacts with TRIM38 (via B30.2/SPRY domain), leading to its translocation to lysosomes and degradation. Interacts with ASB1. As to quaternary structure, (Microbial infection) Interacts with M.tuberculosis PtpA, which blocks the NF-kappa-B signaling pathway. In terms of processing, ubiquitinated; following IL1 stimulation or TRAF6 overexpression. Ubiquitinated by AMFR via 'Lys-27'-linked polyubiquitination; leading to TAK1/MAP3K7 activation. Degraded in a lysosome-dependent manner following interaction with TRIM38. Post-translationally, phosphorylated at Ser-506 by MAPKAPK2 and MAPKAPK3 following IL1 treatment. In terms of processing, (Microbial infection) Methylated at Cys-692 by enteropathogenic E.coli protein NleE or S.flexneri protein OspZ: methylation disrupts zinc-binding and ability to bind 'Lys-63'-linked ubiquitin, leading to NF-kappa-B inactivation. As to expression, widely expressed. Constitutively overexpressed in certain tumor tissues. Major transcript. In terms of tissue distribution, minor transcript.

In terms of biological role, adapter required to activate the JNK and NF-kappa-B signaling pathways through the specific recognition of 'Lys-63'-linked polyubiquitin chains by its RanBP2-type zinc finger (NZF). Acts as an adapter linking MAP3K7/TAK1 and TRAF6 to 'Lys-63'-linked polyubiquitin chains. The RanBP2-type zinc finger (NZF) specifically recognizes Lys-63'-linked polyubiquitin chains unanchored or anchored to the substrate proteins such as RIPK1/RIP1 and RIPK2: this acts as a scaffold to organize a large signaling complex to promote autophosphorylation of MAP3K7/TAK1, and subsequent activation of I-kappa-B-kinase (IKK) core complex by MAP3K7/TAK1. Its function is as follows. May be an oncogenic factor. In Homo sapiens (Human), this protein is TGF-beta-activated kinase 1 and MAP3K7-binding protein 3.